The primary structure comprises 667 residues: NADPH--cytochrome P450 reductase (667 aa).

At 1 to 8 (MEILESID) the chain is on the lumenal side. A helical transmembrane segment spans residues 9 to 29 (FIEVLILDNLGAIIIVAVIVG). At 30–667 (TYLYMNKPPP…HGRYLQDVWF (638 aa)) the chain is on the cytoplasmic side. The Flavodoxin-like domain maps to 72–215 (MKIFFGTQTR…DFNRWKKDMW (144 aa)). FMN contacts are provided by residues 164-173 (LGNKTYEHYN) and D199. One can recognise an FAD-binding FR-type domain in the interval 277 to 511 (KNPYYAEVLE…FVRESHFKLP (235 aa)). R297 is an NADP(+) binding site. Residues 468–470 (TSV) and 484–487 (GVAS) each bind FAD. Residues T527, 586–587 (SR), and 592–596 (KVYVQ) each bind NADP(+). W666 provides a ligand contact to FAD.

The protein belongs to the NADPH--cytochrome P450 reductase family. In the N-terminal section; belongs to the flavodoxin family. This sequence in the C-terminal section; belongs to the flavoprotein pyridine nucleotide cytochrome reductase family. FAD is required as a cofactor. FMN serves as cofactor.

The protein resides in the endoplasmic reticulum membrane. The catalysed reaction is 2 oxidized [cytochrome P450] + NADPH = 2 reduced [cytochrome P450] + NADP(+) + H(+). Its function is as follows. This enzyme is required for electron transfer from NADP to cytochrome P450 in microsomes. It can also provide electron transfer to heme oxygenase and cytochrome B5. The protein is NADPH--cytochrome P450 reductase (redB) of Dictyostelium discoideum (Social amoeba).